A 1792-amino-acid chain; its full sequence is Protein TIC 214 (1792 aa).

Transmembrane regions (helical) follow at residues 18-38 (IINS…FSIG), 64-84 (FITG…HLAL), 87-107 (PHII…GNNH), 129-149 (IFFH…SSIL), 165-185 (IFLI…MKWI), and 221-241 (IFLV…PPPF).

The protein belongs to the TIC214 family. As to quaternary structure, part of the Tic complex.

The protein resides in the plastid. It localises to the chloroplast inner membrane. Its function is as follows. Involved in protein precursor import into chloroplasts. May be part of an intermediate translocation complex acting as a protein-conducting channel at the inner envelope. This Glycine max (Soybean) protein is Protein TIC 214.